A 389-amino-acid chain; its full sequence is 2-aminoethylphosphonate--pyruvate transaminase 1 (389 aa).

The residue at position 196 (lysine 196) is an N6-(pyridoxal phosphate)lysine.

It belongs to the class-V pyridoxal-phosphate-dependent aminotransferase family. PhnW subfamily. As to quaternary structure, homodimer. Pyridoxal 5'-phosphate is required as a cofactor.

It carries out the reaction (2-aminoethyl)phosphonate + pyruvate = phosphonoacetaldehyde + L-alanine. In terms of biological role, involved in phosphonate degradation. The protein is 2-aminoethylphosphonate--pyruvate transaminase 1 of Paraburkholderia xenovorans (strain LB400).